A 412-amino-acid polypeptide reads, in one-letter code: Proteasome-activating nucleotidase (412 aa).

Positions 15-72 (EDLYRYLLERVTNLEDRNTELREQLRQIEADKRYLETQKVRYEREVRKFKGEIEQMKS) form a coiled coil. ATP is bound by residues 197–202 (GTGKTL) and His-336. The tract at residues 410 to 412 (MFA) is docks into pockets in the proteasome alpha-ring to cause gate opening.

This sequence belongs to the AAA ATPase family. Homohexamer. The hexameric complex has a two-ring architecture resembling a top hat that caps the 20S proteasome core at one or both ends. Upon ATP-binding, the C-terminus of PAN interacts with the alpha-rings of the proteasome core by binding to the intersubunit pockets.

Its subcellular location is the cytoplasm. Functionally, ATPase which is responsible for recognizing, binding, unfolding and translocation of substrate proteins into the archaeal 20S proteasome core particle. Is essential for opening the gate of the 20S proteasome via an interaction with its C-terminus, thereby allowing substrate entry and access to the site of proteolysis. Thus, the C-termini of the proteasomal ATPase function like a 'key in a lock' to induce gate opening and therefore regulate proteolysis. Unfolding activity requires energy from ATP hydrolysis, whereas ATP binding alone promotes ATPase-20S proteasome association which triggers gate opening, and supports translocation of unfolded substrates. This chain is Proteasome-activating nucleotidase, found in Methanosphaerula palustris (strain ATCC BAA-1556 / DSM 19958 / E1-9c).